A 533-amino-acid chain; its full sequence is Methyl-accepting chemotaxis protein IV (533 aa).

Over 1 to 6 the chain is Cytoplasmic; it reads MFNRIR. The chain crosses the membrane as a helical span at residues 7-33; it reads ISTTLFLILILCGILQIGSNGMSFWAF. At 34 to 188 the chain is on the periplasmic side; it reads RDDLQRLNQV…AQSQRNYQIS (155 aa). A helical transmembrane segment spans residues 189 to 209; it reads ALVFISMIIVAAIYISSALWW. Topologically, residues 210–533 are cytoplasmic; that stretch reads TRKMIVQPLA…VQLQIAPVVS (324 aa). Residues 212-264 enclose the HAMP domain; the sequence is KMIVQPLAIIGSHFDSIAAGNLARPIAVYGRNEITAIFASLKTMQQALRGTVS. One can recognise a Methyl-accepting transducer domain in the interval 269–498; the sequence is GSQEMHIGIA…EAAVATEQLA (230 aa). Residues glutamine 293, glutamine 300, and glutamine 307 each carry the glutamate methyl ester (Gln) modification. A Glutamate methyl ester (Glu) modification is found at glutamate 489.

It belongs to the methyl-accepting chemotaxis (MCP) protein family.

The protein resides in the cell inner membrane. Its function is as follows. Mediates taxis toward dipeptides via an interaction with the periplasmic dipeptide-binding protein. Functionally, chemotactic-signal transducers respond to changes in the concentration of attractants and repellents in the environment, transduce a signal from the outside to the inside of the cell, and facilitate sensory adaptation through the variation of the level of methylation. Attractants increase the level of methylation while repellents decrease the level of methylation, the methyl groups are added by the methyltransferase CheR and removed by the methylesterase CheB. This Escherichia coli (strain K12) protein is Methyl-accepting chemotaxis protein IV (tap).